The primary structure comprises 160 residues: Serine-protein kinase RsbW (160 aa).

It belongs to the anti-sigma-factor family.

It carries out the reaction L-seryl-[protein] + ATP = O-phospho-L-seryl-[protein] + ADP + H(+). The catalysed reaction is L-threonyl-[protein] + ATP = O-phospho-L-threonyl-[protein] + ADP + H(+). Its function is as follows. Negative regulator of sigma-B activity. Phosphorylates and inactivates its specific antagonist protein, RsbV. Upon phosphorylation of RsbV, RsbW is released and binds to sigma-B, thereby blocking its ability to form an RNA polymerase holoenzyme (E-sigma-B). The chain is Serine-protein kinase RsbW from Bacillus cereus (strain B4264).